The chain runs to 938 residues: Protein NLP3 (938 aa).

Disordered regions lie at residues M1–D26 and L557–K597. Gly residues predominate over residues A12–D26. Over residues S580 to K597 the composition is skewed to basic and acidic residues. The region spanning N585–A666 is the RWP-RK domain. Residues S640–G662 are a coiled coil. The tract at residues D743 to S769 is disordered. Low complexity predominate over residues S748–S762. A PB1 domain is found at T847–V926.

It localises to the nucleus. Functionally, probable transcription factor. This is Protein NLP3 (NLP3) from Oryza sativa subsp. japonica (Rice).